We begin with the raw amino-acid sequence, 445 residues long: N-succinylarginine dihydrolase (445 aa).

Substrate contacts are provided by residues 19–28 (AGLSFGNVAS), Asn-110, and 137–138 (HR). Glu-174 is a catalytic residue. A substrate-binding site is contributed by Arg-214. His-250 is an active-site residue. Residues Asp-252 and Asn-363 each coordinate substrate. The Nucleophile role is filled by Cys-369.

This sequence belongs to the succinylarginine dihydrolase family. As to quaternary structure, homodimer.

The catalysed reaction is N(2)-succinyl-L-arginine + 2 H2O + 2 H(+) = N(2)-succinyl-L-ornithine + 2 NH4(+) + CO2. Its pathway is amino-acid degradation; L-arginine degradation via AST pathway; L-glutamate and succinate from L-arginine: step 2/5. Its function is as follows. Catalyzes the hydrolysis of N(2)-succinylarginine into N(2)-succinylornithine, ammonia and CO(2). The protein is N-succinylarginine dihydrolase of Shewanella pealeana (strain ATCC 700345 / ANG-SQ1).